The chain runs to 443 residues: ATP-dependent protease ATPase subunit HslU (443 aa).

ATP-binding positions include isoleucine 18, 60–65 (GVGKTE), aspartate 256, glutamate 321, and arginine 393.

The protein belongs to the ClpX chaperone family. HslU subfamily. In terms of assembly, a double ring-shaped homohexamer of HslV is capped on each side by a ring-shaped HslU homohexamer. The assembly of the HslU/HslV complex is dependent on binding of ATP.

Its subcellular location is the cytoplasm. Its function is as follows. ATPase subunit of a proteasome-like degradation complex; this subunit has chaperone activity. The binding of ATP and its subsequent hydrolysis by HslU are essential for unfolding of protein substrates subsequently hydrolyzed by HslV. HslU recognizes the N-terminal part of its protein substrates and unfolds these before they are guided to HslV for hydrolysis. This is ATP-dependent protease ATPase subunit HslU from Vibrio cholerae serotype O1 (strain ATCC 39315 / El Tor Inaba N16961).